Here is a 247-residue protein sequence, read N- to C-terminus: NAD(P)H-quinone oxidoreductase subunit K, chloroplastic (247 aa).

[4Fe-4S] cluster contacts are provided by Cys64, Cys65, Cys129, and Cys160.

Belongs to the complex I 20 kDa subunit family. In terms of assembly, NDH is composed of at least 16 different subunits, 5 of which are encoded in the nucleus. [4Fe-4S] cluster serves as cofactor.

The protein resides in the plastid. Its subcellular location is the chloroplast thylakoid membrane. It carries out the reaction a plastoquinone + NADH + (n+1) H(+)(in) = a plastoquinol + NAD(+) + n H(+)(out). The catalysed reaction is a plastoquinone + NADPH + (n+1) H(+)(in) = a plastoquinol + NADP(+) + n H(+)(out). In terms of biological role, NDH shuttles electrons from NAD(P)H:plastoquinone, via FMN and iron-sulfur (Fe-S) centers, to quinones in the photosynthetic chain and possibly in a chloroplast respiratory chain. The immediate electron acceptor for the enzyme in this species is believed to be plastoquinone. Couples the redox reaction to proton translocation, and thus conserves the redox energy in a proton gradient. The polypeptide is NAD(P)H-quinone oxidoreductase subunit K, chloroplastic (Mesostigma viride (Green alga)).